The chain runs to 553 residues: Methyl-coenzyme M reductase subunit alpha (553 aa).

Glutamine 151 is a binding site for coenzyme F430. Residues arginine 229, 260 to 261, and arginine 274 contribute to the coenzyme B site; that span reads KH. Coenzyme M contacts are provided by tyrosine 336 and tyrosine 447.

Belongs to the methyl-coenzyme M reductase alpha subunit family. As to quaternary structure, MCR is a hexamer of two alpha, two beta, and two gamma chains, forming a dimer of heterotrimers. Coenzyme F430 is required as a cofactor.

The protein localises to the cytoplasm. The catalysed reaction is coenzyme B + methyl-coenzyme M = methane + coenzyme M-coenzyme B heterodisulfide. The protein operates within one-carbon metabolism; methyl-coenzyme M reduction; methane from methyl-coenzyme M: step 1/1. Its function is as follows. Component of the methyl-coenzyme M reductase (MCR) I that catalyzes the reductive cleavage of methyl-coenzyme M (CoM-S-CH3 or 2-(methylthio)ethanesulfonate) using coenzyme B (CoB or 7-mercaptoheptanoylthreonine phosphate) as reductant which results in the production of methane and the mixed heterodisulfide of CoB and CoM (CoM-S-S-CoB). This is the final step in methanogenesis. The sequence is that of Methyl-coenzyme M reductase subunit alpha (mcrA) from Methanococcus vannielii.